The following is a 295-amino-acid chain: Small ribosomal subunit protein uS2 (295 aa).

S2 is subject to N-acetylserine. Phosphoserine is present on S43. K52 is subject to N6-acetyllysine. Residues 54–113 are interaction with PPP1R16B; sequence TWEKLLLAARAIVAIENPADVSVISSRNTGQRAVLKFAAATGATPIAGRFTPGTFTNQIQ. N6-acetyllysine; alternate is present on K89. K89 is covalently cross-linked (Glycyl lysine isopeptide (Lys-Gly) (interchain with G-Cter in SUMO2); alternate). The residue at position 97 (T97) is a Phosphothreonine. 2 laminin-binding regions span residues 161-180 and 205-229; these read IPCNNKGAHSVGLMWWMLAR and RDPEEIEKEEQAAAEKAVTKEEFQG. [DE]-W-[ST] repeat units follow at residues 230–232, 247–249, 266–268, 275–277, and 293–295; these read EWT, DWS, and EWS. Residues 242–295 are laminin-binding; the sequence is QPEVADWSEGVQVPSVPIQQFPTEDWSAQPSTEDWSAAPTAQATEWVGTTTEWS. The interval 266–295 is disordered; that stretch reads DWSAQPSTEDWSAAPTAQATEWVGTTTEWS.

The protein belongs to the universal ribosomal protein uS2 family. Monomer (37LRP) and homodimer (67LR). Component of the small ribosomal subunit. Mature ribosomes consist of a small (40S) and a large (60S) subunit. The 40S subunit contains about 33 different proteins and 1 molecule of RNA (18S). The 60S subunit contains about 49 different proteins and 3 molecules of RNA (28S, 5.8S and 5S). Interacts with RPS21. Interacts with several laminins including at least LAMB1. Interacts with MDK. The mature dimeric form interacts with PPP1R16B (via its fourth ankyrin repeat). Interacts with PPP1CA only in the presence of PPP1R16B. Post-translationally, acylated. Acylation may be a prerequisite for conversion of the monomeric 37 kDa laminin receptor precursor (37LRP) to the mature dimeric 67 kDa laminin receptor (67LR), and may provide a mechanism for membrane association. Cleaved by stromelysin-3 (ST3) at the cell surface. Cleavage by stromelysin-3 may be a mechanism to alter cell-extracellular matrix interactions.

It localises to the cell membrane. The protein resides in the cytoplasm. The protein localises to the nucleus. Functionally, required for the assembly and/or stability of the 40S ribosomal subunit. Required for the processing of the 20S rRNA-precursor to mature 18S rRNA in a late step of the maturation of 40S ribosomal subunits. Also functions as a cell surface receptor for laminin. Plays a role in cell adhesion to the basement membrane and in the consequent activation of signaling transduction pathways. May play a role in cell fate determination and tissue morphogenesis. Also acts as a receptor for several other ligands, including the pathogenic prion protein, viruses, and bacteria. Acts as a PPP1R16B-dependent substrate of PPP1CA. The protein is Small ribosomal subunit protein uS2 of Bos taurus (Bovine).